The sequence spans 276 residues: HUWE1-associated protein modifying stress responses 2 (276 aa).

Disordered stretches follow at residues 146–182 (GKVPPTPQPPRTPRMSPRPPAAASTQAAATESGTPVG), 204–238 (ISMRSGPPGSSSQDGGIASSGRWKSSFLENDPNSL), and 252–276 (VRKRTSAQFGDGSADSPLHKRNRMV). A compositionally biased stretch (pro residues) spans 149 to 165 (PPTPQPPRTPRMSPRPP). Low complexity-rich tracts occupy residues 166 to 179 (AAASTQAAATESGT) and 208 to 219 (SGPPGSSSQDGG). Residues 252-276 (VRKRTSAQFGDGSADSPLHKRNRMV) are nuclear localization signal.

The protein belongs to the HAPSTR1 family. In terms of assembly, homooligomer. Heterooligomer with HAPSTR1; the interaction is direct and stabilizes HAPSTR1 independently of HUWE1. Interacts with HUWE1.

It localises to the nucleus. Together with HAPSTR1 plays a central regulatory role in the cellular response to molecular stressors, such as DNA damage, nutrient scarcity, and protein misfolding. Regulates these multiple stress response signaling pathways by stabilizing HAPSTR1, but also independently of HAPSTR1. In Mus musculus (Mouse), this protein is HUWE1-associated protein modifying stress responses 2.